Here is a 191-residue protein sequence, read N- to C-terminus: Probable GTP-binding protein EngB (191 aa).

The EngB-type G domain maps to 22–191 (DFDHFLILGR…KLINEEFSNE (170 aa)). GTP is bound by residues 30–37 (GRSNVGKS), 57–61 (GKTIT), 75–78 (DAPG), 142–145 (TKYD), and 172–174 (TSS). Positions 37 and 59 each coordinate Mg(2+).

It belongs to the TRAFAC class TrmE-Era-EngA-EngB-Septin-like GTPase superfamily. EngB GTPase family. It depends on Mg(2+) as a cofactor.

Its function is as follows. Necessary for normal cell division and for the maintenance of normal septation. The sequence is that of Probable GTP-binding protein EngB from Acholeplasma laidlawii (strain PG-8A).